The primary structure comprises 275 residues: 2,3,4,5-tetrahydropyridine-2,6-dicarboxylate N-succinyltransferase (275 aa).

Residues arginine 108 and aspartate 145 each contribute to the substrate site.

It belongs to the transferase hexapeptide repeat family. As to quaternary structure, homotrimer.

Its subcellular location is the cytoplasm. The enzyme catalyses (S)-2,3,4,5-tetrahydrodipicolinate + succinyl-CoA + H2O = (S)-2-succinylamino-6-oxoheptanedioate + CoA. The protein operates within amino-acid biosynthesis; L-lysine biosynthesis via DAP pathway; LL-2,6-diaminopimelate from (S)-tetrahydrodipicolinate (succinylase route): step 1/3. In Roseobacter denitrificans (strain ATCC 33942 / OCh 114) (Erythrobacter sp. (strain OCh 114)), this protein is 2,3,4,5-tetrahydropyridine-2,6-dicarboxylate N-succinyltransferase.